The following is a 143-amino-acid chain: Putative pre-16S rRNA nuclease (143 aa).

This sequence belongs to the YqgF nuclease family.

It localises to the cytoplasm. Could be a nuclease involved in processing of the 5'-end of pre-16S rRNA. In Salinibacter ruber (strain DSM 13855 / M31), this protein is Putative pre-16S rRNA nuclease.